The sequence spans 372 residues: Tetraacyldisaccharide 4'-kinase (372 aa).

Residue 65–72 (TVGGTGKT) participates in ATP binding. A disordered region spans residues 351-372 (QSTATGMADGLDKEHQDGQPAA). A compositionally biased stretch (basic and acidic residues) spans 360–372 (GLDKEHQDGQPAA).

It belongs to the LpxK family.

The enzyme catalyses a lipid A disaccharide + ATP = a lipid IVA + ADP + H(+). Its pathway is glycolipid biosynthesis; lipid IV(A) biosynthesis; lipid IV(A) from (3R)-3-hydroxytetradecanoyl-[acyl-carrier-protein] and UDP-N-acetyl-alpha-D-glucosamine: step 6/6. In terms of biological role, transfers the gamma-phosphate of ATP to the 4'-position of a tetraacyldisaccharide 1-phosphate intermediate (termed DS-1-P) to form tetraacyldisaccharide 1,4'-bis-phosphate (lipid IVA). In Cupriavidus metallidurans (strain ATCC 43123 / DSM 2839 / NBRC 102507 / CH34) (Ralstonia metallidurans), this protein is Tetraacyldisaccharide 4'-kinase.